We begin with the raw amino-acid sequence, 207 residues long: Cytochrome c biogenesis ATP-binding export protein CcmA (207 aa).

In terms of domain architecture, ABC transporter spans 6-207; sequence LCAEGLECIR…RGDCRSLNLS (202 aa). 38 to 45 contributes to the ATP binding site; the sequence is GANGAGKT.

The protein belongs to the ABC transporter superfamily. CcmA exporter (TC 3.A.1.107) family. As to quaternary structure, the complex is composed of two ATP-binding proteins (CcmA) and two transmembrane proteins (CcmB).

The protein resides in the cell inner membrane. It carries out the reaction heme b(in) + ATP + H2O = heme b(out) + ADP + phosphate + H(+). In terms of biological role, part of the ABC transporter complex CcmAB involved in the biogenesis of c-type cytochromes; once thought to export heme, this seems not to be the case, but its exact role is uncertain. Responsible for energy coupling to the transport system. The protein is Cytochrome c biogenesis ATP-binding export protein CcmA of Methylococcus capsulatus (strain ATCC 33009 / NCIMB 11132 / Bath).